Consider the following 293-residue polypeptide: MSTPVSAEQQAREQDLVERVLRSFDATADPRLKQVMQALTRHLHAFLREVRLTEAEWETGIGFLTDAGHVTNERRQEFILLSDVLGASMQTIAMNNEAHGDATEATVFGPFFVEGSPRIESGGDIAGGAAGEPCWVEGTVTDTDGNPVPDARIEVWEADDDGFYDVQYDDDRTAARAHLLSGPDGGYAFWAITPTPYPIPHDGPVGRMLAATGRSPMRASHLHFMVTAPGRRTLVTHIFVEGDELLDRDSVFGVKDSLVKSFERQPAGAPTPGGREIDGPWSRVRFDIVLAPA.

Positions 164, 197, 221, and 223 each coordinate Fe cation.

It belongs to the intradiol ring-cleavage dioxygenase family. In terms of assembly, homodimer. Fe(3+) is required as a cofactor.

It carries out the reaction benzene-1,2,4-triol + O2 = maleylacetate + 2 H(+). Its pathway is aromatic compound metabolism; beta-ketoadipate pathway; 3-oxoadipate from 3,4-dihydroxybenzoate: step 2/4. With respect to regulation, inhibited by 3,5-dichlorocatechol, chlorohydroquinone and 4,5-dibromocatechol. Catalyzes the ortho-cleavage of the aromatic ring of hydroxyquinol. The chain is Hydroxyquinol 1,2-dioxygenase (chqB) from Nocardioides simplex (Arthrobacter simplex).